The primary structure comprises 255 residues: MPRYALRIEYDGGPFAGWQRQAAQASVQGAIETALGRLEPGPHTIAAAGRTDTGVHASGQVAHCDLVREWDPFRLAGALNAHLKPLPVAIVAAARVPEEFHARFSAVERRYLFRLLARRAPEVHDRGRVWRVPHPLDPEAMRAGAAHLVGRHDFTTFRAAGCQAASPVKTLDALTLETVEGMNGTEYRFHLRARSFLHNQVRSIVGTLERVGAGAWTPDQVREALDARDRAACGPVSPPQGLYLTGVGYPADPFA.

Asp-52 (nucleophile) is an active-site residue. Substrate is bound at residue Tyr-111.

It belongs to the tRNA pseudouridine synthase TruA family. Homodimer.

The enzyme catalyses uridine(38/39/40) in tRNA = pseudouridine(38/39/40) in tRNA. Formation of pseudouridine at positions 38, 39 and 40 in the anticodon stem and loop of transfer RNAs. The chain is tRNA pseudouridine synthase A from Cereibacter sphaeroides (strain ATCC 17023 / DSM 158 / JCM 6121 / CCUG 31486 / LMG 2827 / NBRC 12203 / NCIMB 8253 / ATH 2.4.1.) (Rhodobacter sphaeroides).